The sequence spans 309 residues: Agglutinin (309 aa).

Met1 is modified (N-acetylmethionine). Jacalin-type lectin domains are found at residues Phe4 to Ile148 and Pro163 to Tyr308.

Belongs to the jacalin lectin family.

Its function is as follows. D-mannose/D-glucose-binding lectin. Binds N-linked high-mannose-type glycans. Has a preference for smaller (Man(2)-Man(6)) high-mannose-type glycans to larger (Man(7)-Man(9)) ones. Recognizes both alpha1-6 extended and alpha1-3 extended monoantennary glycans. The addition of alpha1-2Man to the Man-alpha1-3Man-beta branch results in a significant loss of affinity, but beta1-2GlcNAc has some affinity. Has less affinity for biantennary glycans, and affinity is very weak for the biantennary complex-type N-glycans with bisecting GlcNAc. No affinity is observed for tri- and tetra-antennary glycans. Has mitogenic and hemagglutinating activities. The protein is Agglutinin of Castanea crenata (Japanese chestnut).